Here is a 190-residue protein sequence, read N- to C-terminus: Outer-membrane lipoprotein LolB (190 aa).

Residues 1 to 16 form the signal peptide; that stretch reads MRLRFSLLLTVSLLAG. A lipid anchor (N-palmitoyl cysteine) is attached at Cys-17. Residue Cys-17 is the site of S-diacylglycerol cysteine attachment.

It belongs to the LolB family. As to quaternary structure, monomer.

Its subcellular location is the cell outer membrane. Functionally, plays a critical role in the incorporation of lipoproteins in the outer membrane after they are released by the LolA protein. The protein is Outer-membrane lipoprotein LolB of Dechloromonas aromatica (strain RCB).